We begin with the raw amino-acid sequence, 187 residues long: Accessory gene regulator protein B (187 aa).

The next 5 membrane-spanning stretches (helical) occupy residues 49-69 (IAYI…FYLI), 82-102 (FWCY…VLHF), 107-127 (TLMM…APAA), 143-163 (YFSI…KEPY), and 164-184 (TQFI…IYYS).

The protein belongs to the AgrB family.

The protein resides in the cell membrane. Functionally, essential for the production of a quorum sensing system signal molecule, the autoinducing peptide (AIP). This quorum sensing system is responsible for the regulation of the expression of virulence factor genes. Involved in the proteolytic processing of AgrD, the precursor of AIP. The chain is Accessory gene regulator protein B from Staphylococcus aureus (strain MW2).